Reading from the N-terminus, the 239-residue chain is Tetrahydromethanopterin S-methyltransferase subunit A (239 aa).

Over 1–215 (MANKKSPAAT…EAAMIAKFNS (215 aa)) the chain is Cytoplasmic. 5-hydroxybenzimidazolylcob(I)amide is bound at residue His-85. Residues 216–238 (GYYNGKIQGIAIGLFLSILVFSL) traverse the membrane as a helical segment. Residue Leu-239 is a topological domain, extracellular.

It belongs to the MtrA family. The complex is composed of 8 subunits; MtrA, MtrB, MtrC, MtrD, MtrE, MtrF, MtrG and MtrH. Requires 5-hydroxybenzimidazolylcob(I)amide as cofactor.

Its subcellular location is the cell membrane. It carries out the reaction 5-methyl-5,6,7,8-tetrahydromethanopterin + coenzyme M + 2 Na(+)(in) = 5,6,7,8-tetrahydromethanopterin + methyl-coenzyme M + 2 Na(+)(out). It functions in the pathway one-carbon metabolism; methanogenesis from CO(2); methyl-coenzyme M from 5,10-methylene-5,6,7,8-tetrahydromethanopterin: step 2/2. Its function is as follows. Part of a complex that catalyzes the formation of methyl-coenzyme M and tetrahydromethanopterin from coenzyme M and methyl-tetrahydromethanopterin. This is an energy-conserving, sodium-ion translocating step. This Methanococcus maripaludis (strain C7 / ATCC BAA-1331) protein is Tetrahydromethanopterin S-methyltransferase subunit A.